The primary structure comprises 356 residues: Cell division protein ZipA (356 aa).

At 1–6 (MEDLQL) the chain is on the periplasmic side. The chain crosses the membrane as a helical span at residues 7-27 (VLFVLGAIAIVAVLVHGFWSI). At 28-356 (RRQQPKSLKD…DYLHRIRANA (329 aa)) the chain is on the cytoplasmic side. The disordered stretch occupies residues 132–155 (PAQPDFSLQPPVAKEQHRGPKVSR).

The protein belongs to the ZipA family. As to quaternary structure, interacts with FtsZ via their C-terminal domains.

It is found in the cell inner membrane. Functionally, essential cell division protein that stabilizes the FtsZ protofilaments by cross-linking them and that serves as a cytoplasmic membrane anchor for the Z ring. Also required for the recruitment to the septal ring of downstream cell division proteins. In Shewanella baltica (strain OS185), this protein is Cell division protein ZipA.